A 257-amino-acid polypeptide reads, in one-letter code: Low affinity immunoglobulin gamma Fc region receptor III-A (257 aa).

Positions M1 to T19 are cleaved as a signal peptide. Topologically, residues H20–Q209 are extracellular. Ig-like C2-type domains lie at P25–E104 and G108–T190. 2 disulfide bridges follow: C48–C90 and C129–C173. 3 N-linked (GlcNAc...) asparagine glycosylation sites follow: N64, N134, and N162. D181 carries an N-linked (GlcNAc...) asparagine; in variant N-181 glycan. Residues I210–V230 traverse the membrane as a helical segment. Residues R231–G257 are Cytoplasmic-facing.

In terms of assembly, forms a heterooligomeric complex with ITAM-containing signaling subunits FCER1G. Interacts (via transmembrane domain) with signaling subunits; this interaction is a prerequisite for receptor complex expression on the cell surface and intracellular signal transduction. Binds the Fc region of antigen-complexed IgG. In terms of tissue distribution, expressed in polymorphonuclear leukocytes, pulmonary alveolar macrophages and peripheral blood mononuclear cells (at protein level). Found in spleen, and at very low levels in lymph nodes but not in thymus or liver.

It is found in the cell membrane. In terms of biological role, receptor for the invariable Fc fragment of immunoglobulin gamma (IgG). Optimally activated upon binding of clustered antigen-IgG complexes displayed on cell surfaces, triggers lysis of antibody-coated cells, a process known as antibody-dependent cellular cytotoxicity (ADCC). Does not bind free monomeric IgG, thus avoiding inappropriate effector cell activation in the absence of antigenic trigger. Mediates IgG effector functions on natural killer (NK) cells. Binds antigen-IgG complexes generated upon infection and triggers NK cell-dependent cytokine production and degranulation to limit viral load and propagation. Fc-binding subunit that associates with FCER1G adapter to form functional signaling complexes. Following the engagement of antigen-IgG complexes, triggers phosphorylation of immunoreceptor tyrosine-based activation motif (ITAM)-containing adapter with subsequent activation of phosphatidylinositol 3-kinase signaling and sustained elevation of intracellular calcium that ultimately drive NK cell activation. Mediates enhanced ADCC in response to afucosylated IgGs. This is Low affinity immunoglobulin gamma Fc region receptor III-A from Sus scrofa (Pig).